A 1466-amino-acid chain; its full sequence is Adhesion G protein-coupled receptor L1 (1466 aa).

The first 28 residues, 1-28, serve as a signal peptide directing secretion; the sequence is MARLAAALWSLCVTTVLVTSATQGLSRA. Over 29–852 the chain is Extracellular; that stretch reads GLPFGLMRRE…EIYQGRINEL (824 aa). The 90-residue stretch at 40–129 folds into the SUEL-type lectin domain; sequence ACEGYPIELR…KYLEVQYDCV (90 aa). Cystine bridges form between C41-C71, C50-C128, C83-C115, C96-C102, and C135-C317. E42 contacts alpha-L-rhamnose. Residue N98 is glycosylated (N-linked (GlcNAc...) asparagine). 117–120 lines the alpha-L-rhamnose pocket; it reads GTYK. In terms of domain architecture, Olfactomedin-like spans 134 to 393; the sequence is VCPGTLQKVL…VVRYSLEFGP (260 aa). The tract at residues 395-463 is disordered; sequence DPSAGPATSP…APAPSTRRPP (69 aa). Residues 400-436 show a composition bias toward low complexity; the sequence is PATSPPLSTTTTARPTPLTSTASPAATTPLRRAPLTT. Residues 448-463 are compositionally biased toward pro residues; that stretch reads DLPPATAPAPSTRRPP. Cystine bridges form between C475/C510 and C498/C527. N-linked (GlcNAc...) asparagine glycosylation is found at N526, N635, N736, N795, N800, and N821. Residues 664-845 enclose the GAIN-B domain; it reads PARFLAAKQN…AVLMAHREIY (182 aa). 2 disulfide bridges follow: C796/C827 and C815/C829. The GPS stretch occupies residues 796-845; the sequence is CSFWNYSERSMLGYWSTQGCRLVESNKTHTTCACSHLTNFAVLMAHREIY. Residues 853–873 form a helical membrane-spanning segment; it reads LLSVITWVGIVISLVCLAICI. Residues 874–887 lie on the Cytoplasmic side of the membrane; that stretch reads STFCFLRGLQTDRN. The chain crosses the membrane as a helical span at residues 888–908; it reads TIHKNLCINLFLAELLFLVGI. Topologically, residues 909 to 914 are extracellular; that stretch reads DKTQYE. The helical transmembrane segment at 915–935 threads the bilayer; the sequence is VACPIFAGLLHYFFLAAFSWL. Residues 936–958 are Cytoplasmic-facing; the sequence is CLEGVHLYLLLVEVFESEYSRTK. A helical membrane pass occupies residues 959–979; the sequence is YYYLGGYCFPALVVGIAAAID. Residues 980–996 lie on the Extracellular side of the membrane; that stretch reads YRSYGTEKACWLRVDNY. Residues 997-1017 form a helical membrane-spanning segment; the sequence is FIWSFIGPVSFVIVVNLVFLM. Residues 1018-1044 lie on the Cytoplasmic side of the membrane; sequence VTLHKMIRSSSVLKPDSSRLDNIKSWA. The chain crosses the membrane as a helical span at residues 1045-1065; sequence LGAIALLFLLGLTWAFGLLFI. Residues 1066-1069 are Extracellular-facing; the sequence is NKES. A helical transmembrane segment spans residues 1070–1090; the sequence is VVMAYLFTTFNAFQGVFIFVF. Residues 1091-1466 are Cytoplasmic-facing; it reads HCALQKKVHK…DGQMQLVTSL (376 aa). R1188 is modified (omega-N-methylarginine). S1214 carries the post-translational modification Phosphoserine. 4 disordered regions span residues 1242–1267, 1288–1319, 1352–1421, and 1443–1466; these read FNNS…RGRN, RGAS…GPGS, ESES…SRPP, and YLAA…VTSL. Over residues 1296–1307 the composition is skewed to pro residues; it reads GPPPEPPVPPVP. The residue at position 1319 (S1319) is a Phosphoserine. Residues 1400–1412 are compositionally biased toward pro residues; sequence ALPPPPPAPPGPP. Phosphoserine occurs at positions 1448 and 1465.

This sequence belongs to the G-protein coupled receptor 2 family. Adhesion G-protein coupled receptor (ADGR) subfamily. As to quaternary structure, forms a heterodimer, consisting of a large extracellular region (p120) non-covalently linked to a seven-transmembrane moiety (p85). Interacts with syntaxin and with proteins of the SHANK family via the PDZ domain. Interacts (via extracellular domain) with FLRT1, FLRT2 and FLRT3 (via extracellular domain). In terms of processing, autoproteolytically cleaved into 2 subunits, an extracellular subunit and a seven-transmembrane subunit. This proteolytic processing takes place early in the biosynthetic pathway, either in the endoplasmic reticulum or in the early compartment of the Golgi apparatus.

Its subcellular location is the cell membrane. It localises to the cell projection. It is found in the axon. The protein resides in the growth cone. The protein localises to the synapse. Its subcellular location is the presynaptic cell membrane. It localises to the synaptosome. Functionally, calcium-independent receptor of high affinity for alpha-latrotoxin, an excitatory neurotoxin present in black widow spider venom which triggers massive exocytosis from neurons and neuroendocrine cells. Receptor for TENM2 that mediates heterophilic synaptic cell-cell contact and postsynaptic specialization. Receptor probably implicated in the regulation of exocytosis. The protein is Adhesion G protein-coupled receptor L1 of Mus musculus (Mouse).